The sequence spans 223 residues: Endonuclease V (223 aa).

D35 and D103 together coordinate Mg(2+).

It belongs to the endonuclease V family. It depends on Mg(2+) as a cofactor.

The protein localises to the cytoplasm. The enzyme catalyses Endonucleolytic cleavage at apurinic or apyrimidinic sites to products with a 5'-phosphate.. In terms of biological role, DNA repair enzyme involved in the repair of deaminated bases. Selectively cleaves double-stranded DNA at the second phosphodiester bond 3' to a deoxyinosine leaving behind the intact lesion on the nicked DNA. The chain is Endonuclease V from Shigella flexneri serotype 5b (strain 8401).